A 193-amino-acid chain; its full sequence is MVATGSLSSKNPASISELLDHGFYPGSLLNDFDYWDYVVPEPNLNEVVFEETTCQSLVKMLENCLSKSKHTKLGCSRVLVPEKLTQRIAQDVLRLSSTEPCGLRGCVMHVNLEIENVCKKLDRIVCDSSVVPTFELTLVFKQENCSWTSFRDFFFSRGRFSSGLRRTLILSSGFRLVKKKLYSLIGTTVIEEC.

This sequence belongs to the DDIT4 family.

The protein localises to the cytoplasm. In terms of biological role, inhibits cell growth by regulating the TOR signaling pathway upstream of the TSC1-TSC2 complex and downstream of AKT1. This chain is DNA damage-inducible transcript 4-like protein (DDIT4L), found in Bos taurus (Bovine).